The sequence spans 119 residues: Ribonuclease P protein component (119 aa).

This sequence belongs to the RnpA family. In terms of assembly, consists of a catalytic RNA component (M1 or rnpB) and a protein subunit.

It catalyses the reaction Endonucleolytic cleavage of RNA, removing 5'-extranucleotides from tRNA precursor.. Functionally, RNaseP catalyzes the removal of the 5'-leader sequence from pre-tRNA to produce the mature 5'-terminus. It can also cleave other RNA substrates such as 4.5S RNA. The protein component plays an auxiliary but essential role in vivo by binding to the 5'-leader sequence and broadening the substrate specificity of the ribozyme. This chain is Ribonuclease P protein component, found in Streptococcus pyogenes serotype M1.